The chain runs to 1805 residues: Cytadherence high molecular weight protein 2 (1805 aa).

Coiled coils occupy residues 28 to 838, 914 to 1591, 1632 to 1723, and 1777 to 1804; these read EKNR…NNAF, ELKI…LRTQ, DNTL…QHNT, and NITKQQQIAQLNAEINNIKRLIAQKAAS.

Its function is as follows. Component of the cytoskeleton-like structure which stabilizes the shape of the wall-less Mycoplasma. This cytoskeleton-like network of accessory proteins containing HMW proteins 1 to 5 allows the proper anchoring of cytadhesin proteins in the mycoplasmal membrane at the attachment organelle. The polypeptide is Cytadherence high molecular weight protein 2 (hmw2) (Mycoplasma genitalium (strain ATCC 33530 / DSM 19775 / NCTC 10195 / G37) (Mycoplasmoides genitalium)).